We begin with the raw amino-acid sequence, 115 residues long: Protamine-2 (115 aa).

Residues 1-115 (MVRCHVKSPT…RRRRRCGRQL (115 aa)) form a disordered region. At serine 8 the chain carries Phosphoserine. Over residues 24–38 (ETEHPDQARELRPED) the composition is skewed to basic and acidic residues. 2 stretches are compositionally biased toward basic residues: residues 44–79 (RTHRGRYHYRHRSHTRRRPYRRRRRRACRHRRRRRG) and 102–115 (RRMRRRRRRCGRQL).

This sequence belongs to the protamine P2 family. In terms of assembly, interacts with TDRP. Post-translationally, proteolytic processing into mature chains is required for histone eviction during spermatogenesis. Transition proteins (TNP1 and TNP2) are required for processing. In terms of tissue distribution, testis.

It localises to the nucleus. It is found in the chromosome. Its function is as follows. Protamines substitute for histones in the chromatin of sperm during the haploid phase of spermatogenesis. They compact sperm DNA into a highly condensed, stable and inactive complex. This chain is Protamine-2 (PRM2), found in Bos taurus (Bovine).